A 671-amino-acid polypeptide reads, in one-letter code: Preterminal protein (671 aa).

The Nuclear localization signal motif lies at 380–389 (RLPVRRRRRR). A disordered region spans residues 386–409 (RRRRVPPPPPPPEEEEEGEALMEE). Over residues 397-409 (PEEEEEGEALMEE) the composition is skewed to acidic residues. Ser580 carries the O-(5'-phospho-DNA)-serine modification. The interval 645–671 (GADVPLPPLPAGPEPPLPPGARPRHRF) is disordered. Over residues 649-665 (PLPPLPAGPEPPLPPGA) the composition is skewed to pro residues.

Belongs to the adenoviridae terminal protein family. Heterodimer with the polymerase; this heterodimer binds to bp 9 to 18 of the genome. Interacts with host POU2F1; POU2F1 binds to the auxiliary sequences in the inverted terminal repeats and tethers the pTP-POL heterodimer to the origin DNA thereby participating in the assembly of the pre-initiation complex (POL-TP-DBP-NFIA-POU2F1). Post-translationally, preterminal protein is used to replicate viral genome, upon genomic encapsidation it is processed first into iTP and finally into TP by adenovirus protease.

It is found in the host nucleus matrix. Protein covalently bound to the viral DNA that acts as a primer for viral genomic replication by DNA strand displacement. Assembles on the viral origin of replication in an initiation complex with viral polymerase, DBP, host NFIA and host POU2F1/OCT1. During initiation, the polymerase covalently couples the first dCTP with Ser-580 of pTP. The terminal protein stimulates the template activity over 20 fold compared to protein-free templates. Neo-synthesized viral genomes are linked to two preterminal proteins, one for each 5' end. These new genomes are encapsidated in the nucleus, and during capsid maturation by viral protease, preterminal protein is first cleaved into intermediary (iTP), then into mature TP. May play a role in host nuclear matrix localization of genomic DNA. This Homo sapiens (Human) protein is Preterminal protein.